We begin with the raw amino-acid sequence, 69 residues long: Metallothionein-like protein 3 (69 aa).

This sequence belongs to the metallothionein superfamily. Type 15 family. As to expression, expressed in leaf mesophyll cells, root tips, and at low levels in anthers.

Functionally, metallothioneins have a high content of cysteine residues that bind various heavy metals. Functions as a metal chelator of copper (Cu) and zinc (Zn). Plays a role in Cu homeostasis, specifically in the remobilization of Cu from senescing leaves. The mobilization of Cu from internal sources is important for seed development. The sequence is that of Metallothionein-like protein 3 from Arabidopsis thaliana (Mouse-ear cress).